Consider the following 140-residue polypeptide: Endoribonuclease YbeY (140 aa).

3 residues coordinate Zn(2+): His-100, His-104, and His-110.

The protein belongs to the endoribonuclease YbeY family. The cofactor is Zn(2+).

It localises to the cytoplasm. Functionally, single strand-specific metallo-endoribonuclease involved in late-stage 70S ribosome quality control and in maturation of the 3' terminus of the 16S rRNA. The protein is Endoribonuclease YbeY of Helicobacter pylori (strain P12).